The chain runs to 90 residues: Bombyxin B-3 (90 aa).

The signal sequence occupies residues 1–20 (MMKTTIMFMLVVVISLTYSS). 3 cysteine pairs are disulfide-bonded: cysteine 30-cysteine 76, cysteine 42-cysteine 89, and cysteine 75-cysteine 80. The propeptide at 49–67 (SGAQYAPYFWTRQYLGSRG) is c peptide like.

It belongs to the insulin family. Heterodimer of a B chain and an A chain linked by two disulfide bonds.

The protein localises to the secreted. Functionally, brain peptide responsible for activation of prothoracic glands to produce ecdysone in insects. The chain is Bombyxin B-3 (BBXB3) from Bombyx mori (Silk moth).